Consider the following 231-residue polypeptide: Transmembrane gamma-carboxyglutamic acid protein 3 (231 aa).

A propeptide spanning residues 1-19 (MAVFLEAKNAHAVLKRFPR) is cleaved from the precursor. Residues 20–65 (ANEFLEELRQGTIERECMEEICSYEEVKEVFENKEKTMEFWKGYPN) form the Gla domain. Topologically, residues 20-78 (ANEFLEELRQGTIERECMEEICSYEEVKEVFENKEKTMEFWKGYPNAVYSVRDPSQSSD) are extracellular. 4-carboxyglutamate occurs at positions 22, 25, 26, 33, 35, 38, 39, 44, 45, 48, 51, 54, and 58. A disulfide bridge links Cys-36 with Cys-41. The chain crosses the membrane as a helical span at residues 79 to 101 (AMYVVVPLLGVVLLIVIALFIIW). Residues 102–231 (RCQLQKATRH…IVAASPSADK (130 aa)) lie on the Cytoplasmic side of the membrane. 2 disordered regions span residues 140–165 (HSQG…SRGG) and 184–231 (RLSS…SADK). Over residues 201-212 (QEGSSEEASVSY) the composition is skewed to polar residues.

Gla residues are produced after subsequent post-translational modifications of glutamate by a vitamin K-dependent gamma-carboxylase.

Its subcellular location is the membrane. The protein is Transmembrane gamma-carboxyglutamic acid protein 3 (Prrg3) of Mus musculus (Mouse).